The sequence spans 89 residues: Small ribosomal subunit protein uS15 (89 aa).

It belongs to the universal ribosomal protein uS15 family. In terms of assembly, part of the 30S ribosomal subunit. Forms a bridge to the 50S subunit in the 70S ribosome, contacting the 23S rRNA.

In terms of biological role, one of the primary rRNA binding proteins, it binds directly to 16S rRNA where it helps nucleate assembly of the platform of the 30S subunit by binding and bridging several RNA helices of the 16S rRNA. Its function is as follows. Forms an intersubunit bridge (bridge B4) with the 23S rRNA of the 50S subunit in the ribosome. This Dechloromonas aromatica (strain RCB) protein is Small ribosomal subunit protein uS15.